The sequence spans 554 residues: Valerianol synthase TPS1A (554 aa).

Residues D307 and D311 each contribute to the Mg(2+) site. Positions 326–330 (VQRWD) match the DDXXD motif motif. Residues D452, S456, and E460 each coordinate Mg(2+).

This sequence belongs to the terpene synthase family. It depends on Mg(2+) as a cofactor. In terms of tissue distribution, expressed in flowers.

The catalysed reaction is (2E,6E)-farnesyl diphosphate + H2O = valerianol + diphosphate. The protein operates within secondary metabolite biosynthesis; terpenoid biosynthesis. Its function is as follows. Terpene synthase that catalyzes the biosynthesis of the terpene valerianol, which is a volatile compound of floral scent. The chain is Valerianol synthase TPS1A from Camellia hiemalis (Camellia).